We begin with the raw amino-acid sequence, 284 residues long: tRNA N(3)-cytidine methyltransferase METTL6 (284 aa).

Residues W45 and Y49 each coordinate S-adenosyl-L-methionine. S-adenosyl-L-homocysteine-binding residues include Y49, H61, E85, G87, D110, D136, L137, and I157. The S-adenosyl-L-methionine site is built by G87, D110, D136, L137, and I157.

The protein belongs to the methyltransferase superfamily. METL family. As to quaternary structure, monomer. Interacts with SARS1/SerRS; interaction is mediated via tRNA(Ser) and is required for N(3)-methylcytidine methylation.

It is found in the cytoplasm. Its subcellular location is the nucleus. The enzyme catalyses cytidine(32) in tRNA(Ser) + S-adenosyl-L-methionine = N(3)-methylcytidine(32) in tRNA(Ser) + S-adenosyl-L-homocysteine + H(+). Functionally, S-adenosyl-L-methionine-dependent methyltransferase that mediates N(3)-methylcytidine modification of residue 32 of the tRNA anticodon loop of tRNA(Ser), including tRNA(Ser)(UGA) and tRNA(Ser)(GCU). Interaction with SARS1/SerRS is required for N(3)-methylcytidine methylation. The chain is tRNA N(3)-cytidine methyltransferase METTL6 from Homo sapiens (Human).